The primary structure comprises 400 residues: Glycerol-3-phosphate dehydrogenase [NAD(+)] 1, chloroplastic (400 aa).

Residues 1 to 32 constitute a chloroplast transit peptide; it reads MRFRSFFFSSSIFSLSHSRSPSLSSSRFSSLS. Residues 61 to 66, F92, F149, K172, and A205 each bind NAD(+); that span reads GSGNWG. K172 contributes to the substrate binding site. The active-site Proton acceptor is the K257. R321, K350, and Q352 together coordinate NAD(+). 321-322 contacts substrate; sequence RN.

This sequence belongs to the NAD-dependent glycerol-3-phosphate dehydrogenase family. As to expression, expressed in young seedlings, flowers and siliques. Expressed at low levels in roots.

It localises to the plastid. The protein resides in the chloroplast. The enzyme catalyses sn-glycerol 3-phosphate + NAD(+) = dihydroxyacetone phosphate + NADH + H(+). It functions in the pathway membrane lipid metabolism; glycerophospholipid metabolism. Involved in glycerolipid metabolism. The sequence is that of Glycerol-3-phosphate dehydrogenase [NAD(+)] 1, chloroplastic (DHAPRD) from Arabidopsis thaliana (Mouse-ear cress).